The chain runs to 346 residues: Cobalt transport protein CbiM (346 aa).

Positions 1 to 25 (MKRITLYAAGSAIIGAMLLAGPAHA) are cleaved as a signal peptide. The next 8 helical transmembrane spans lie at 31 to 51 (GILPLGWAALWFAVAAPFLAL), 68 to 88 (PLVGLMAAVVFIISCMPIPVP), 101 to 121 (IAAILVGPLVSVVITTVALLI), 133 to 153 (TLGADVVSMGVAGSFAGWFVF), 159 to 179 (LGAGLAVAAFVAGLLADWATY), 196 to 216 (FYPLFLKIVAAFVPTQLPLGV), 255 to 275 (ATVVMLALFCLLASLLVAGPS), and 312 to 332 (LLLFVFLLAGTVGGFAAGYFW).

The protein belongs to the CbiM family. As to quaternary structure, forms an energy-coupling factor (ECF) transporter complex composed of an ATP-binding protein (A component, CbiO), a transmembrane protein (T component, CbiQ) and 2 possible substrate-capture proteins (S components, CbiM and CbiN) of unknown stoichimetry.

Its subcellular location is the cell inner membrane. Its pathway is cofactor biosynthesis; adenosylcobalamin biosynthesis. Its function is as follows. Part of the energy-coupling factor (ECF) transporter complex CbiMNOQ involved in cobalt import. The polypeptide is Cobalt transport protein CbiM (Geobacter sulfurreducens (strain ATCC 51573 / DSM 12127 / PCA)).